The primary structure comprises 237 residues: uncharacterized protein (237 aa).

A disordered region spans residues 1–26 (MKRIRDVLSHENSNNTNYSDTNDTDY). Residues 12 to 21 (NSNNTNYSDT) show a composition bias toward low complexity.

This sequence belongs to the mimivirus R160 family.

This is an uncharacterized protein from Acanthamoeba polyphaga mimivirus (APMV).